The chain runs to 236 residues: Zinc finger AN1 domain-containing stress-associated protein 13 (236 aa).

Disordered regions lie at residues 48 to 81 and 150 to 173; these read KEGR…PGKR and TVPE…AKTK. Residues 66-75 show a composition bias toward polar residues; that stretch reads RLQLPTTSIV. The AN1-type; degenerate zinc finger occupies 170 to 216; the sequence is AKTKSRCAACGRRVGLMGFECRCGAVFCGAHPLLGQARLWLRLQGRA. Residues C176, C179, C197, and H200 each coordinate Zn(2+).

Its function is as follows. May be involved in environmental stress response. This is Zinc finger AN1 domain-containing stress-associated protein 13 (SAP13) from Oryza sativa subsp. japonica (Rice).